Here is a 538-residue protein sequence, read N- to C-terminus: Probable cytochrome P450 309a2 (538 aa).

A heme-binding site is contributed by Cys483.

The protein belongs to the cytochrome P450 family. Heme serves as cofactor.

It is found in the endoplasmic reticulum membrane. The protein resides in the microsome membrane. Functionally, may be involved in the metabolism of insect hormones and in the breakdown of synthetic insecticides. The polypeptide is Probable cytochrome P450 309a2 (Cyp309a2) (Drosophila melanogaster (Fruit fly)).